The sequence spans 130 residues: MKDWLDEIKWNSDGLVPAIAQDHKTGRVLMMAWMNRESLALTAAEQRAIYWSRSRGKLWRKGEESGHVQKLHELRLDCDADVIILMVEQLGHIACHTGRESCFYRVYEDGQWKIVDPVLKDPDAIYSAGH.

Aspartate 77 contacts Mg(2+). Cysteine 78 contributes to the Zn(2+) binding site. Positions 79 and 81 each coordinate Mg(2+). Zn(2+) is bound by residues cysteine 95 and cysteine 102.

This sequence belongs to the PRA-CH family. In terms of assembly, homodimer. Mg(2+) is required as a cofactor. Requires Zn(2+) as cofactor.

Its subcellular location is the cytoplasm. It catalyses the reaction 1-(5-phospho-beta-D-ribosyl)-5'-AMP + H2O = 1-(5-phospho-beta-D-ribosyl)-5-[(5-phospho-beta-D-ribosylamino)methylideneamino]imidazole-4-carboxamide. It functions in the pathway amino-acid biosynthesis; L-histidine biosynthesis; L-histidine from 5-phospho-alpha-D-ribose 1-diphosphate: step 3/9. Catalyzes the hydrolysis of the adenine ring of phosphoribosyl-AMP. The protein is Phosphoribosyl-AMP cyclohydrolase of Pseudomonas putida (strain ATCC 700007 / DSM 6899 / JCM 31910 / BCRC 17059 / LMG 24140 / F1).